Here is a 273-residue protein sequence, read N- to C-terminus: ATP synthase subunit a (273 aa).

The next 5 helical transmembrane spans lie at 42–62 (TLNIDSLFFSVVLGALFLFIF), 102–122 (VIAPLALTVFVWVFLMNMMDL), 148–168 (DVSITLSMALGVFILILFYSI), 213–233 (LFGNMYAGELIFILIAGLLPW), and 244–264 (AIFHILIITLQAFIFMVLTIV).

It belongs to the ATPase A chain family. In terms of assembly, F-type ATPases have 2 components, CF(1) - the catalytic core - and CF(0) - the membrane proton channel. CF(1) has five subunits: alpha(3), beta(3), gamma(1), delta(1), epsilon(1). CF(0) has three main subunits: a(1), b(2) and c(9-12). The alpha and beta chains form an alternating ring which encloses part of the gamma chain. CF(1) is attached to CF(0) by a central stalk formed by the gamma and epsilon chains, while a peripheral stalk is formed by the delta and b chains.

The protein localises to the cell inner membrane. In terms of biological role, key component of the proton channel; it plays a direct role in the translocation of protons across the membrane. The protein is ATP synthase subunit a of Serratia proteamaculans (strain 568).